Consider the following 261-residue polypeptide: MTHQTHAYHMVNPSPWPLTGALSALLMTSGLIMWFHFNSTTLLTLGLTTNMLTMYQWWRDVIRESTFQGHHTPTVQKGLRYGMILFIISEVLFFTGFFWAFYHSSLAPTPELGGCWPPTGIHPLNPLEVPLLNTSVLLASGVSITWAHHSLMEGNRNPMLQALFITIALGIYFTLLQASEYYEAPFTISDGVYGSTFFVATGFHGLHVIIGSTFLIVCFFRQLKFHFTSNHHFGFEAAAWYWHFVDVVWLFLYVSIYWWGS.

Residues 1–15 (MTHQTHAYHMVNPSP) lie on the Mitochondrial matrix side of the membrane. A helical membrane pass occupies residues 16–34 (WPLTGALSALLMTSGLIMW). Residues 35 to 40 (FHFNST) are Mitochondrial intermembrane-facing. Residues 41–66 (TLLTLGLTTNMLTMYQWWRDVIREST) traverse the membrane as a helical segment. At 67-72 (FQGHHT) the chain is on the mitochondrial matrix side. A helical membrane pass occupies residues 73-105 (PTVQKGLRYGMILFIISEVLFFTGFFWAFYHSS). At 106–128 (LAPTPELGGCWPPTGIHPLNPLE) the chain is on the mitochondrial intermembrane side. The chain crosses the membrane as a helical span at residues 129–152 (VPLLNTSVLLASGVSITWAHHSLM). Residues 153 to 155 (EGN) lie on the Mitochondrial matrix side of the membrane. A helical membrane pass occupies residues 156 to 183 (RNPMLQALFITIALGIYFTLLQASEYYE). Over 184-190 (APFTISD) the chain is Mitochondrial intermembrane. Residues 191 to 223 (GVYGSTFFVATGFHGLHVIIGSTFLIVCFFRQL) traverse the membrane as a helical segment. Residues 224–232 (KFHFTSNHH) are Mitochondrial matrix-facing. The helical transmembrane segment at 233–256 (FGFEAAAWYWHFVDVVWLFLYVSI) threads the bilayer. Topologically, residues 257-261 (YWWGS) are mitochondrial intermembrane.

It belongs to the cytochrome c oxidase subunit 3 family. As to quaternary structure, component of the cytochrome c oxidase (complex IV, CIV), a multisubunit enzyme composed of 14 subunits. The complex is composed of a catalytic core of 3 subunits MT-CO1, MT-CO2 and MT-CO3, encoded in the mitochondrial DNA, and 11 supernumerary subunits COX4I, COX5A, COX5B, COX6A, COX6B, COX6C, COX7A, COX7B, COX7C, COX8 and NDUFA4, which are encoded in the nuclear genome. The complex exists as a monomer or a dimer and forms supercomplexes (SCs) in the inner mitochondrial membrane with NADH-ubiquinone oxidoreductase (complex I, CI) and ubiquinol-cytochrome c oxidoreductase (cytochrome b-c1 complex, complex III, CIII), resulting in different assemblies (supercomplex SCI(1)III(2)IV(1) and megacomplex MCI(2)III(2)IV(2)).

It localises to the mitochondrion inner membrane. The enzyme catalyses 4 Fe(II)-[cytochrome c] + O2 + 8 H(+)(in) = 4 Fe(III)-[cytochrome c] + 2 H2O + 4 H(+)(out). Functionally, component of the cytochrome c oxidase, the last enzyme in the mitochondrial electron transport chain which drives oxidative phosphorylation. The respiratory chain contains 3 multisubunit complexes succinate dehydrogenase (complex II, CII), ubiquinol-cytochrome c oxidoreductase (cytochrome b-c1 complex, complex III, CIII) and cytochrome c oxidase (complex IV, CIV), that cooperate to transfer electrons derived from NADH and succinate to molecular oxygen, creating an electrochemical gradient over the inner membrane that drives transmembrane transport and the ATP synthase. Cytochrome c oxidase is the component of the respiratory chain that catalyzes the reduction of oxygen to water. Electrons originating from reduced cytochrome c in the intermembrane space (IMS) are transferred via the dinuclear copper A center (CU(A)) of subunit 2 and heme A of subunit 1 to the active site in subunit 1, a binuclear center (BNC) formed by heme A3 and copper B (CU(B)). The BNC reduces molecular oxygen to 2 water molecules using 4 electrons from cytochrome c in the IMS and 4 protons from the mitochondrial matrix. The protein is Cytochrome c oxidase subunit 3 (MT-CO3) of Madoqua guentheri (Guenther's dik-dik).